We begin with the raw amino-acid sequence, 929 residues long: Bifunctional uridylyltransferase/uridylyl-removing enzyme (929 aa).

The tract at residues 1–379 (MSPSRPAADE…RPAAKRRRVP (379 aa)) is uridylyltransferase. Positions 380-735 (ESDDFVIDNN…VGFDEARAVT (356 aa)) are uridylyl-removing. The HD domain maps to 495–618 (VDEHLIRCVG…VETVEQMKML (124 aa)). 2 ACT domains span residues 736–818 (ELTI…AVAR) and 849–929 (VIEV…KPAA).

This sequence belongs to the GlnD family. It depends on Mg(2+) as a cofactor.

It catalyses the reaction [protein-PII]-L-tyrosine + UTP = [protein-PII]-uridylyl-L-tyrosine + diphosphate. It carries out the reaction [protein-PII]-uridylyl-L-tyrosine + H2O = [protein-PII]-L-tyrosine + UMP + H(+). Uridylyltransferase (UTase) activity is inhibited by glutamine, while glutamine activates uridylyl-removing (UR) activity. Modifies, by uridylylation and deuridylylation, the PII regulatory proteins (GlnB and homologs), in response to the nitrogen status of the cell that GlnD senses through the glutamine level. Under low glutamine levels, catalyzes the conversion of the PII proteins and UTP to PII-UMP and PPi, while under higher glutamine levels, GlnD hydrolyzes PII-UMP to PII and UMP (deuridylylation). Thus, controls uridylylation state and activity of the PII proteins, and plays an important role in the regulation of nitrogen fixation and metabolism. The chain is Bifunctional uridylyltransferase/uridylyl-removing enzyme from Rhodopseudomonas palustris (strain ATCC BAA-98 / CGA009).